Reading from the N-terminus, the 150-residue chain is Ribonuclease H (150 aa).

An RNase H type-1 domain is found at 1–142 (MSDSVELFTD…ADQLANRGVD (142 aa)). The Mg(2+) site is built by D10, E48, D70, and D134.

This sequence belongs to the RNase H family. Monomer. Requires Mg(2+) as cofactor.

The protein resides in the cytoplasm. It catalyses the reaction Endonucleolytic cleavage to 5'-phosphomonoester.. Endonuclease that specifically degrades the RNA of RNA-DNA hybrids. This is Ribonuclease H from Pseudomonas syringae pv. syringae (strain B728a).